We begin with the raw amino-acid sequence, 330 residues long: tRNA uridine(34) hydroxylase (330 aa).

One can recognise a Rhodanese domain in the interval 123 to 217; it reads SDPETILVDT…YLEEVPKEES (95 aa). The active-site Cysteine persulfide intermediate is Cys-177. Positions 310-330 are disordered; the sequence is LNKQQKQQAKEIARKKAKSEI. Basic and acidic residues predominate over residues 317–330; it reads QAKEIARKKAKSEI.

The protein belongs to the TrhO family.

It carries out the reaction uridine(34) in tRNA + AH2 + O2 = 5-hydroxyuridine(34) in tRNA + A + H2O. In terms of biological role, catalyzes oxygen-dependent 5-hydroxyuridine (ho5U) modification at position 34 in tRNAs. The sequence is that of tRNA uridine(34) hydroxylase from Francisella philomiragia subsp. philomiragia (strain ATCC 25017 / CCUG 19701 / FSC 153 / O#319-036).